Here is a 101-residue protein sequence, read N- to C-terminus: MIPGEYDIQPGDIELNAGRRTLALSVANTGDRPIQVGSHYHFFEVNDALAFDRPATRGMRLNIAAGTAVRFEPGQSREVELVELAGERRVYGFAGRVMGDL.

This sequence belongs to the urease beta subunit family. As to quaternary structure, heterotrimer of UreA (gamma), UreB (beta) and UreC (alpha) subunits. Three heterotrimers associate to form the active enzyme.

It localises to the cytoplasm. It carries out the reaction urea + 2 H2O + H(+) = hydrogencarbonate + 2 NH4(+). It participates in nitrogen metabolism; urea degradation; CO(2) and NH(3) from urea (urease route): step 1/1. This Pseudomonas paraeruginosa (strain DSM 24068 / PA7) (Pseudomonas aeruginosa (strain PA7)) protein is Urease subunit beta.